The chain runs to 680 residues: Coiled-coil domain-containing protein 138 (680 aa).

The residue at position 63 (Thr63) is a Phosphothreonine. The residue at position 64 (Ser64) is a Phosphoserine. Residues 260–339 adopt a coiled-coil conformation; it reads KEQHGTEIEH…YEFMTVQRLK (80 aa). Positions 390–410 are disordered; it reads EPEEPGVDGGKPPAKPSQRSD. Residue Ser484 is modified to Phosphoserine.

The chain is Coiled-coil domain-containing protein 138 (Ccdc138) from Mus musculus (Mouse).